The chain runs to 89 residues: Envelope protein US9 (89 aa).

The span at 1–10 shows a compositional bias: basic and acidic residues; the sequence is MTSRPADQDS. Positions 1-21 are disordered; it reads MTSRPADQDSVRSSASVPLYP. Residues 1 to 66 are Intravirion-facing; it reads MTSRPADQDS…RRRRTRCVGL (66 aa). Positions 20-23 match the Internalization motif motif; it reads YPAA. The tract at residues 29 to 38 is acidic; that stretch reads EAYYSESEDE. Phosphoserine; by host CK2 occurs at positions 33 and 35. Residues 67–87 traverse the membrane as a helical; Signal-anchor for type II membrane protein segment; sequence VIACLVVALLSGGFGALLVWL. At 88–89 the chain is on the virion surface side; that stretch reads LR.

This sequence belongs to the alphaherpesvirinae envelope protein US9 family. Post-translationally, phosphorylated on serines within the acidic cluster, possibly by host CK2. Phosphorylation determines whether endocytosed viral US9 traffics to the trans-Golgi network or recycles to the cell membrane.

The protein resides in the virion membrane. It is found in the host Golgi apparatus membrane. The protein localises to the host smooth endoplasmic reticulum membrane. Its subcellular location is the host cell membrane. Functionally, essential for the anterograde spread of the infection throughout the host nervous system. Together with the gE/gI heterodimer, US9 is involved in the sorting and transport of viral structural components toward axon tips. The chain is Envelope protein US9 from Homo sapiens (Human).